We begin with the raw amino-acid sequence, 212 residues long: Negative modulator of initiation of replication (212 aa).

Interaction with DNA regions lie at residues 113–114 and 144–148; these read AV and RTRVY.

The protein belongs to the SeqA family. As to quaternary structure, homodimer. Polymerizes to form helical filaments.

Its subcellular location is the cytoplasm. Its function is as follows. Negative regulator of replication initiation, which contributes to regulation of DNA replication and ensures that replication initiation occurs exactly once per chromosome per cell cycle. Binds to pairs of hemimethylated GATC sequences in the oriC region, thus preventing assembly of replication proteins and re-initiation at newly replicated origins. Repression is relieved when the region becomes fully methylated. This is Negative modulator of initiation of replication from Actinobacillus succinogenes (strain ATCC 55618 / DSM 22257 / CCUG 43843 / 130Z).